The sequence spans 183 residues: SsrA-binding protein (183 aa).

The tract at residues 1–27 is disordered; sequence MAKKATLVDHGAAKGKKKAQSKVSKKN. Basic residues predominate over residues 13–27; the sequence is AKGKKKAQSKVSKKN.

It belongs to the SmpB family.

It is found in the cytoplasm. Functionally, required for rescue of stalled ribosomes mediated by trans-translation. Binds to transfer-messenger RNA (tmRNA), required for stable association of tmRNA with ribosomes. tmRNA and SmpB together mimic tRNA shape, replacing the anticodon stem-loop with SmpB. tmRNA is encoded by the ssrA gene; the 2 termini fold to resemble tRNA(Ala) and it encodes a 'tag peptide', a short internal open reading frame. During trans-translation Ala-aminoacylated tmRNA acts like a tRNA, entering the A-site of stalled ribosomes, displacing the stalled mRNA. The ribosome then switches to translate the ORF on the tmRNA; the nascent peptide is terminated with the 'tag peptide' encoded by the tmRNA and targeted for degradation. The ribosome is freed to recommence translation, which seems to be the essential function of trans-translation. This chain is SsrA-binding protein, found in Corynebacterium kroppenstedtii (strain DSM 44385 / JCM 11950 / CIP 105744 / CCUG 35717).